The sequence spans 323 residues: Type II restriction enzyme BsoBI (323 aa).

Asp-212, Glu-240, and Lys-242 together coordinate Mg(2+).

In terms of assembly, homodimer.

It catalyses the reaction Endonucleolytic cleavage of DNA to give specific double-stranded fragments with terminal 5'-phosphates.. In terms of biological role, a P subtype restriction enzyme that recognizes the double-stranded sequence 5'-CYCGRG-3' and cleaves after C-1. The polypeptide is Type II restriction enzyme BsoBI (Geobacillus stearothermophilus (Bacillus stearothermophilus)).